The following is a 407-amino-acid chain: MLIISYIALCLLFIVYLYTLSVRIEGKIINVMVPYLIITVPTLYVFEGIFVYLSEVQNYTVEYLFFYTCYITYIASFVISYLYTQRKPIYNKSNTKNKPRYVFTSLLFTFLAFIIYLPVLMEFREYILSPRRIYELTRTGYGIYFYPSLMFSLVASICAFFTYKKSKLFCISIVLFNCILIFLHGNKGPIFSIFIAFILYLSYIENKKIKFMFLVKSFAVIAVIVTAFFAYTFTDGNPIENMANYSDYTRNAVLVASSNFDFMYGKLLMESEVYSRIPRAIWPDKPEDFGALYLAKVFFPDAFYRNQGAPAFGYGELYADFGLFTPVWLVISGVFKGVLAKYFSNKTQETKSAHYFIMFLFCIGISVIPVSMGWLFPEHLMIAFMVYIASSFVFSEHIRFVLLRNNK.

Helical transmembrane passes span Leu-2 to Val-22, Val-31 to Val-51, Tyr-63 to Tyr-83, Tyr-101 to Met-121, Tyr-141 to Phe-161, Leu-168 to Gly-185, Ile-190 to Ile-204, Phe-211 to Tyr-231, Ala-319 to Leu-339, Phe-356 to Phe-376, and Ile-382 to Leu-402.

Its subcellular location is the cell inner membrane. The enzyme catalyses n lipid-linked O-antigen repeat units = a lipid-linked O antigen + (n-1) polyisoprenyl diphosphate.. It functions in the pathway bacterial outer membrane biogenesis; LPS O-antigen biosynthesis. In terms of biological role, polymerase involved in the biosynthesis of the lipopolysaccharide (LPS). Catalyzes the polymerization of the O-antigen repeat units on the periplasmic face of the inner membrane, leading to the formation of the lipid-linked O-antigen molecule. The polypeptide is O-antigen polymerase (rfc) (Salmonella typhi).